A 150-amino-acid polypeptide reads, in one-letter code: Putative STAG3-like protein 4 (150 aa).

It belongs to the SCC3 family.

The polypeptide is Putative STAG3-like protein 4 (STAG3L4) (Homo sapiens (Human)).